A 755-amino-acid polypeptide reads, in one-letter code: Xaa-Pro dipeptidyl-peptidase (755 aa).

Active-site charge relay system residues include Ser348, Asp468, and His498.

This sequence belongs to the peptidase S15 family. Homodimer.

Its subcellular location is the cytoplasm. The enzyme catalyses Hydrolyzes Xaa-Pro-|- bonds to release unblocked, N-terminal dipeptides from substrates including Ala-Pro-|-p-nitroanilide and (sequentially) Tyr-Pro-|-Phe-Pro-|-Gly-Pro-|-Ile.. Its function is as follows. Removes N-terminal dipeptides sequentially from polypeptides having unsubstituted N-termini provided that the penultimate residue is proline. This is Xaa-Pro dipeptidyl-peptidase from Streptococcus thermophilus.